The following is a 703-amino-acid chain: tRNA 5-methylaminomethyl-2-thiouridine biosynthesis bifunctional protein MnmC (703 aa).

The tract at residues 1–281 is tRNA (mnm(5)s(2)U34)-methyltransferase; it reads MTAKPQKSCQ…KPAALVAKDH (281 aa). The segment at 286–703 is FAD-dependent cmnm(5)s(2)U34 oxidoreductase; sequence VGGGLASANL…LRKLLKGKAL (418 aa).

It in the N-terminal section; belongs to the methyltransferase superfamily. tRNA (mnm(5)s(2)U34)-methyltransferase family. In the C-terminal section; belongs to the DAO family. The cofactor is FAD.

The protein localises to the cytoplasm. The enzyme catalyses 5-aminomethyl-2-thiouridine(34) in tRNA + S-adenosyl-L-methionine = 5-methylaminomethyl-2-thiouridine(34) in tRNA + S-adenosyl-L-homocysteine + H(+). Its function is as follows. Catalyzes the last two steps in the biosynthesis of 5-methylaminomethyl-2-thiouridine (mnm(5)s(2)U) at the wobble position (U34) in tRNA. Catalyzes the FAD-dependent demodification of cmnm(5)s(2)U34 to nm(5)s(2)U34, followed by the transfer of a methyl group from S-adenosyl-L-methionine to nm(5)s(2)U34, to form mnm(5)s(2)U34. The polypeptide is tRNA 5-methylaminomethyl-2-thiouridine biosynthesis bifunctional protein MnmC (Shewanella sp. (strain MR-7)).